A 109-amino-acid chain; its full sequence is U26-theraphotoxin-Cg1a (109 aa).

Residues 1 to 18 form the signal peptide; it reads MNTIIPLLLLSLLITVYA. A propeptide spanning residues 19–67 is cleaved from the precursor; that stretch reads YALEDGNKEEIQDIAESEFEASNEMLQLAHLLEADRAETEEDRNSRQKR. 3 cysteine pairs are disulfide-bonded: C68–C83, C75–C88, and C82–C103.

It belongs to the neurotoxin 14 (magi-1) family. 07 (Jztx-56) subfamily. In terms of tissue distribution, expressed by the venom gland.

It is found in the secreted. Probable ion channel inhibitor. This Chilobrachys guangxiensis (Chinese earth tiger tarantula) protein is U26-theraphotoxin-Cg1a.